The primary structure comprises 220 residues: Pyrrolidone-carboxylate peptidase 1 (220 aa).

Active-site residues include Glu80, Cys143, and His172.

The protein belongs to the peptidase C15 family. Homotetramer.

Its subcellular location is the cytoplasm. The enzyme catalyses Release of an N-terminal pyroglutamyl group from a polypeptide, the second amino acid generally not being Pro.. Functionally, removes 5-oxoproline from various penultimate amino acid residues except L-proline. In Photorhabdus laumondii subsp. laumondii (strain DSM 15139 / CIP 105565 / TT01) (Photorhabdus luminescens subsp. laumondii), this protein is Pyrrolidone-carboxylate peptidase 1.